A 237-amino-acid chain; its full sequence is MDWLMGKSKAKPNGKKPAAEERKAYLEPEHTKARITDFQFKELVVLPREIDLNEWLASNTTTFFHHINLQYSTISEFCTGETCQTMAVCNTQYYWYDERGKKVKCTAPQYVDFVMSSVQKLVTDEDVFPTKYGREFPSSFESLVRKICRHLFHVLAHIYWAHFKETLALELHGHLNTLYVHFILFAREFNLLDPKETAIMDDLTEVLCSGAGGVHSGGSGDGAGSGGPGAQNHVKER.

A disordered region spans residues 1 to 21; that stretch reads MDWLMGKSKAKPNGKKPAAEE. Residues Cys78, Cys83, His157, and His162 each coordinate Zn(2+). Residues 217 to 229 are compositionally biased toward gly residues; the sequence is GGSGDGAGSGGPG. The segment at 217–237 is disordered; sequence GGSGDGAGSGGPGAQNHVKER.

It belongs to the MOB1/phocein family. As to quaternary structure, binds STK38 and STK38L. In terms of processing, phosphorylated.

Its subcellular location is the nucleus. The protein resides in the cytoplasm. It localises to the perinuclear region. Its function is as follows. Stimulates the autophosphorylation and kinase activity of STK38 and STK38L. The polypeptide is MOB kinase activator 2 (MOB2) (Homo sapiens (Human)).